The following is a 329-amino-acid chain: Homeobox protein Nkx-3.2 (329 aa).

Residues G107–P188 form a disordered region. Positions S110–P124 are enriched in gly residues. The segment covering E138–G160 has biased composition (basic and acidic residues). The homeobox DNA-binding region spans K202–Q261.

The protein belongs to the NK-3 homeobox family. First expressed in developing facial cartilage in early tailbud embryos, with expression localized to the basihyobranchial, palatoquadrate and possibly Meckel's cartilages. Shortly after, a second area of expression is seen in the musculature of the anterior gut. During late embryogenesis, gut expression extends into hindgut tissues. In adults, expressed at a high level in the kidney, pancreas, spleen and stomach and at a slightly lower level in the intestine, skeletal muscle and tongue. Adult heart, liver and lung show little or no expression.

Its subcellular location is the nucleus. This Xenopus laevis (African clawed frog) protein is Homeobox protein Nkx-3.2 (nkx3-2).